Here is a 462-residue protein sequence, read N- to C-terminus: tRNA wybutosine-synthesizing protein 2 (462 aa).

S-adenosyl-L-methionine is bound by residues Ser-257, Lys-264, and 305–306 (EL).

The protein belongs to the class I-like SAM-binding methyltransferase superfamily. TRM5/TYW2 family.

It is found in the cytoplasm. The catalysed reaction is 4-demethylwyosine(37) in tRNA(Phe) + S-adenosyl-L-methionine = 4-demethyl-7-[(3S)-3-amino-3-carboxypropyl]wyosine(37) in tRNA(Phe) + S-methyl-5'-thioadenosine + H(+). Its pathway is tRNA modification; wybutosine-tRNA(Phe) biosynthesis. S-adenosyl-L-methionine-dependent transferase that acts as a component of the wybutosine biosynthesis pathway. Wybutosine is a hyper modified guanosine with a tricyclic base found at the 3'-position adjacent to the anticodon of eukaryotic phenylalanine tRNA. Catalyzes the transfer of the alpha-amino-alpha-carboxypropyl (acp) group from S-adenosyl-L-methionine to the C-7 position of 4-demethylwyosine (imG-14) to produce wybutosine-86. This Saccharomyces cerevisiae (strain ATCC 204508 / S288c) (Baker's yeast) protein is tRNA wybutosine-synthesizing protein 2 (TRM12).